The primary structure comprises 344 residues: N-acetyl-gamma-glutamyl-phosphate reductase (344 aa).

Residue cysteine 148 is part of the active site.

Belongs to the NAGSA dehydrogenase family. Type 1 subfamily.

It is found in the cytoplasm. The enzyme catalyses N-acetyl-L-glutamate 5-semialdehyde + phosphate + NADP(+) = N-acetyl-L-glutamyl 5-phosphate + NADPH + H(+). It functions in the pathway amino-acid biosynthesis; L-arginine biosynthesis; N(2)-acetyl-L-ornithine from L-glutamate: step 3/4. Catalyzes the NADPH-dependent reduction of N-acetyl-5-glutamyl phosphate to yield N-acetyl-L-glutamate 5-semialdehyde. This Clostridium botulinum (strain Alaska E43 / Type E3) protein is N-acetyl-gamma-glutamyl-phosphate reductase.